The sequence spans 447 residues: UPF0210 protein OEOE_0945 (447 aa).

It belongs to the UPF0210 family. Homodimer.

In Oenococcus oeni (strain ATCC BAA-331 / PSU-1), this protein is UPF0210 protein OEOE_0945.